Reading from the N-terminus, the 36-residue chain is Serine protease inhibitor 2 (36 aa).

Residues 1 to 36 enclose the Pacifastin domain; it reads EISCEPGTTFQDKCNTCRCGKDGKSAAGCTLKACPQ. 3 disulfides stabilise this stretch: C4–C19, C14–C34, and C17–C29.

It belongs to the protease inhibitor I19 family. As to expression, expressed in hemolymph.

The protein localises to the secreted. Probable serine protease inhibitor. The polypeptide is Serine protease inhibitor 2 (Melanoplus sanguinipes (Migratory grasshopper)).